The chain runs to 470 residues: Acetyl-CoA decarbonylase/synthase complex subunit gamma 2 (470 aa).

The 4Fe-4S domain occupies 1–60 (MKINSPLEAYKYLPQTNCGECGQPTCMAFASTLIDRSGKTTDCPPLIKEKKFAKKLAELD). Cys18, Cys21, Cys26, and Cys43 together coordinate [4Fe-4S] cluster.

Heterodimer of delta and gamma chains. The ACDS complex is made up of alpha, epsilon, beta, gamma and delta chains with a probable stoichiometry of (alpha(2)epsilon(2))(4)-beta(8)-(gamma(1)delta(1))(8). It depends on corrinoid as a cofactor. Requires [4Fe-4S] cluster as cofactor.

The catalysed reaction is 5,6,7,8-tetrahydrosarcinapterin + methyl-Co(III)-[corrinoid Fe-S protein] = 5-methyltetrahydrosarcinapterin + Co(I)-[corrinoid Fe-S protein] + H(+). The protein operates within one-carbon metabolism; methanogenesis from acetate. In terms of biological role, part of a complex that catalyzes the reversible cleavage of acetyl-CoA, allowing growth on acetate as sole source of carbon and energy. The polypeptide is Acetyl-CoA decarbonylase/synthase complex subunit gamma 2 (Methanosarcina mazei (strain ATCC BAA-159 / DSM 3647 / Goe1 / Go1 / JCM 11833 / OCM 88) (Methanosarcina frisia)).